The following is a 1393-amino-acid chain: Rab3 GTPase-activating protein non-catalytic subunit (1393 aa).

Residues 36–67 (RDPSKSTDWEDDGWGAWEENEPQEPEEEGNTC) form a disordered region. Position 39 is a phosphoserine (Ser-39). The span at 44 to 64 (WEDDGWGAWEENEPQEPEEEG) shows a compositional bias: acidic residues. Ser-450 is subject to Phosphoserine. A Phosphothreonine modification is found at Thr-901. Residues Ser-916 and Ser-978 each carry the phosphoserine modification.

This sequence belongs to the Rab3-GAP regulatory subunit family. In terms of assembly, the Rab3 GTPase-activating complex is a heterodimer composed of RAB3GAP1 and RAB3GAP2. The Rab3 GTPase-activating complex interacts with DMXL2. Interacts with LMAN1. In terms of tissue distribution, ubiquitous.

The protein localises to the cytoplasm. Its subcellular location is the endoplasmic reticulum. Functionally, regulatory subunit of the Rab3 GTPase-activating (Rab3GAP) complex composed of RAB3GAP1 and RAB3GAP2, which has GTPase-activating protein (GAP) activity towards various Rab3 subfamily members (RAB3A, RAB3B, RAB3C and RAB3D), RAB5A and RAB43, and guanine nucleotide exchange factor (GEF) activity towards RAB18. As part of the Rab3GAP complex, acts as a GAP for Rab3 proteins by converting active RAB3-GTP to the inactive form RAB3-GDP. Rab3 proteins are involved in regulated exocytosis of neurotransmitters and hormones. The Rab3GAP complex acts as a GEF for RAB18 by promoting the conversion of inactive RAB18-GDP to the active form RAB18-GTP. Recruits and stabilizes RAB18 at the cis-Golgi membrane in human fibroblasts where RAB18 is most likely activated. Also involved in RAB18 recruitment at the endoplasmic reticulum (ER) membrane where it maintains proper ER structure. Required for normal eye and brain development. May participate in neurodevelopmental processes such as proliferation, migration and differentiation before synapse formation, and non-synaptic vesicular release of neurotransmitters. The chain is Rab3 GTPase-activating protein non-catalytic subunit from Homo sapiens (Human).